We begin with the raw amino-acid sequence, 85 residues long: Small ribosomal subunit protein bS20 (85 aa).

This sequence belongs to the bacterial ribosomal protein bS20 family.

In terms of biological role, binds directly to 16S ribosomal RNA. This chain is Small ribosomal subunit protein bS20, found in Cytophaga hutchinsonii (strain ATCC 33406 / DSM 1761 / CIP 103989 / NBRC 15051 / NCIMB 9469 / D465).